A 149-amino-acid polypeptide reads, in one-letter code: UPF0178 protein SERP0336 (149 aa).

Belongs to the UPF0178 family.

The chain is UPF0178 protein SERP0336 from Staphylococcus epidermidis (strain ATCC 35984 / DSM 28319 / BCRC 17069 / CCUG 31568 / BM 3577 / RP62A).